The sequence spans 158 residues: Protein shisa-like-2B (158 aa).

A helical transmembrane segment spans residues 65-85 (IGALVGLGIAALVLLAFVISV).

The protein belongs to the shisa family.

The protein resides in the membrane. In Mus musculus (Mouse), this protein is Protein shisa-like-2B (Shisal2b).